A 352-amino-acid polypeptide reads, in one-letter code: Ion-translocating oxidoreductase complex subunit D (352 aa).

A run of 5 helical transmembrane segments spans residues 20 to 40 (IMLL…WFFG), 42 to 62 (GTLV…ALVL), 78 to 109 (ALLT…VIIA), 123 to 143 (PAMI…TSWL), and 148 to 168 (IAVN…GHTA). T187 is subject to FMN phosphoryl threonine. Transmembrane regions (helical) follow at residues 214 to 234 (ILAG…GVWL), 242 to 262 (WHIP…GWLF), 267 to 287 (LAAP…FFIL), 301 to 321 (LIFG…GGYP), and 322 to 342 (DGVA…DYYT).

The protein belongs to the NqrB/RnfD family. The complex is composed of six subunits: RsxA, RsxB, RsxC, RsxD, RsxE and RsxG. FMN serves as cofactor.

Its subcellular location is the cell inner membrane. Part of a membrane-bound complex that couples electron transfer with translocation of ions across the membrane. Required to maintain the reduced state of SoxR. The sequence is that of Ion-translocating oxidoreductase complex subunit D from Escherichia coli O157:H7.